The sequence spans 140 residues: ATP synthase epsilon chain (140 aa).

The protein belongs to the ATPase epsilon chain family. F-type ATPases have 2 components, CF(1) - the catalytic core - and CF(0) - the membrane proton channel. CF(1) has five subunits: alpha(3), beta(3), gamma(1), delta(1), epsilon(1). CF(0) has three main subunits: a, b and c.

It localises to the cell inner membrane. Functionally, produces ATP from ADP in the presence of a proton gradient across the membrane. The sequence is that of ATP synthase epsilon chain from Neisseria meningitidis serogroup C / serotype 2a (strain ATCC 700532 / DSM 15464 / FAM18).